The following is a 350-amino-acid chain: L-threonine 3-dehydrogenase (350 aa).

Cys-42 is a binding site for Zn(2+). Catalysis depends on charge relay system residues Thr-44 and His-47. The Zn(2+) site is built by His-67, Glu-68, Cys-97, Cys-100, Cys-103, and Cys-111. NAD(+)-binding positions include Leu-179, Glu-199, Arg-204, Leu-266 to Leu-268, and Ile-291 to Thr-292.

The protein belongs to the zinc-containing alcohol dehydrogenase family. As to quaternary structure, homotetramer. Requires Zn(2+) as cofactor.

Its subcellular location is the cytoplasm. The enzyme catalyses L-threonine + NAD(+) = (2S)-2-amino-3-oxobutanoate + NADH + H(+). It functions in the pathway amino-acid degradation; L-threonine degradation via oxydo-reductase pathway; glycine from L-threonine: step 1/2. Functionally, catalyzes the NAD(+)-dependent oxidation of L-threonine to 2-amino-3-ketobutyrate. To a lesser extent, also catalyzes the oxidation of L-serine. In Thermococcus kodakarensis (strain ATCC BAA-918 / JCM 12380 / KOD1) (Pyrococcus kodakaraensis (strain KOD1)), this protein is L-threonine 3-dehydrogenase.